A 225-amino-acid polypeptide reads, in one-letter code: Uracil-DNA glycosylase (225 aa).

The active-site Proton acceptor is Asp64.

The protein belongs to the uracil-DNA glycosylase (UDG) superfamily. UNG family.

It localises to the cytoplasm. The enzyme catalyses Hydrolyzes single-stranded DNA or mismatched double-stranded DNA and polynucleotides, releasing free uracil.. Excises uracil residues from the DNA which can arise as a result of misincorporation of dUMP residues by DNA polymerase or due to deamination of cytosine. The chain is Uracil-DNA glycosylase from Lachnoclostridium phytofermentans (strain ATCC 700394 / DSM 18823 / ISDg) (Clostridium phytofermentans).